Here is a 445-residue protein sequence, read N- to C-terminus: D-serine transporter DsdX (445 aa).

The next 12 membrane-spanning stretches (helical) occupy residues 5-25 (IWVV…IVKF), 29-49 (PFLA…MGPL), 57-77 (SGIG…TILG), 106-126 (VLVG…VLLI), 140-160 (LLKL…VVPP), 178-198 (VIVY…PLFL), 224-244 (TLPS…LMLV), 265-285 (IGNP…VLGI), 302-322 (FGSI…NAIL), 343-363 (ILLA…ATVA), 385-405 (IIAI…DSLF), and 425-445 (TATF…SFII).

Belongs to the GntP permease family.

The protein localises to the cell inner membrane. Uptake of D-serine is inhibited by carbonyl cyanide m-chlorophenylhydrazone (CCCP), and at high concentrations of D-threonine, stimulated by D-cycloserine and not affected by D-alanine or glycine. Protein that allows transport of D-serine across the inner membrane, does not transport D-alanine nor probably glycine. Is probably a H(+) symporter, as CCCP inhibits transport. Transports D-serine more efficiently than CycA. In Escherichia coli O6:H1 (strain CFT073 / ATCC 700928 / UPEC), this protein is D-serine transporter DsdX (dsdX).